Consider the following 142-residue polypeptide: Large ribosomal subunit protein uL13 (142 aa).

The protein belongs to the universal ribosomal protein uL13 family. Part of the 50S ribosomal subunit.

In terms of biological role, this protein is one of the early assembly proteins of the 50S ribosomal subunit, although it is not seen to bind rRNA by itself. It is important during the early stages of 50S assembly. This Glaesserella parasuis serovar 5 (strain SH0165) (Haemophilus parasuis) protein is Large ribosomal subunit protein uL13.